A 34-amino-acid chain; its full sequence is Jingzhaotoxin F7-10.36 (34 aa).

Disulfide bonds link Cys-2/Cys-17, Cys-9/Cys-22, and Cys-16/Cys-29.

The protein belongs to the neurotoxin 10 (Hwtx-1) family. 50 (Jztz-F7) subfamily. In terms of tissue distribution, expressed by the venom gland.

The protein localises to the secreted. Its function is as follows. Probable ion channel inhibitor. The sequence is that of Jingzhaotoxin F7-10.36 from Chilobrachys guangxiensis (Chinese earth tiger tarantula).